A 457-amino-acid polypeptide reads, in one-letter code: Argininosuccinate lyase (457 aa).

It belongs to the lyase 1 family. Argininosuccinate lyase subfamily.

The protein resides in the cytoplasm. It catalyses the reaction 2-(N(omega)-L-arginino)succinate = fumarate + L-arginine. It participates in amino-acid biosynthesis; L-arginine biosynthesis; L-arginine from L-ornithine and carbamoyl phosphate: step 3/3. The chain is Argininosuccinate lyase from Escherichia coli O9:H4 (strain HS).